We begin with the raw amino-acid sequence, 710 residues long: mRNA export factor crp79 (710 aa).

2 RRM domains span residues 19-102 (IYVG…KLTI) and 222-292 (HFKQ…PTTP). Positions 333-348 (QWGSVSTTGVSNQQNH) are enriched in polar residues. The disordered stretch occupies residues 333–357 (QWGSVSTTGVSNQQNHPAAWNPDNK). In terms of domain architecture, RRM 3 spans 401-474 (EDLFSPFGSI…DRIRRLQAFF (74 aa)). The span at 502-524 (TIRKPIESSTNKISENPTTLSSK) shows a compositional bias: polar residues. A disordered region spans residues 502–544 (TIRKPIESSTNKISENPTTLSSKVENKNEPKTGENKEPSQTNE). Basic and acidic residues predominate over residues 525–538 (VENKNEPKTGENKE).

It localises to the cytoplasm. Its subcellular location is the nucleus. Binds the poly(A) tail of mRNA. Involved in the export of mRNA from the nucleus to the cytoplasm. In Schizosaccharomyces pombe (strain 972 / ATCC 24843) (Fission yeast), this protein is mRNA export factor crp79 (crp79).